The chain runs to 235 residues: Chalcone--flavanone isomerase 2 (235 aa).

T50 and S192 together coordinate substrate.

It belongs to the chalcone isomerase family.

The enzyme catalyses a chalcone = a flavanone.. The protein operates within secondary metabolite biosynthesis; flavonoid biosynthesis. Catalyzes the intramolecular cyclization of bicyclic chalcones into tricyclic (S)-flavanones. Responsible for the isomerization of 4,2',4',6'-tetrahydroxychalcone (also termed chalcone) into naringenin. This is Chalcone--flavanone isomerase 2 (CHI2) from Chrysanthemum morifolium (Florist's daisy).